The sequence spans 207 residues: Large ribosomal subunit protein uL4 (207 aa).

Residues 45 to 57 are compositionally biased toward polar residues; the sequence is RQGTHSVKNRSTV. Residues 45-77 form a disordered region; the sequence is RQGTHSVKNRSTVSGGGRKPWRQKGTGNARQGS.

Belongs to the universal ribosomal protein uL4 family. In terms of assembly, part of the 50S ribosomal subunit.

In terms of biological role, one of the primary rRNA binding proteins, this protein initially binds near the 5'-end of the 23S rRNA. It is important during the early stages of 50S assembly. It makes multiple contacts with different domains of the 23S rRNA in the assembled 50S subunit and ribosome. Its function is as follows. Forms part of the polypeptide exit tunnel. This is Large ribosomal subunit protein uL4 from Oenococcus oeni (strain ATCC BAA-331 / PSU-1).